The sequence spans 392 residues: Formate-dependent phosphoribosylglycinamide formyltransferase (392 aa).

N(1)-(5-phospho-beta-D-ribosyl)glycinamide-binding positions include 20 to 21 and E80; that span reads EL. ATP is bound by residues R112, K153, 158–163, 193–196, and E201; these read SSGKGQ and EGFI. The ATP-grasp domain occupies 117–306; it reads RLAAETLALP…EFALHVRAIL (190 aa). Mg(2+)-binding residues include E265 and E277. N(1)-(5-phospho-beta-D-ribosyl)glycinamide is bound by residues D284, K354, and 361–362; that span reads RR.

It belongs to the PurK/PurT family. As to quaternary structure, homodimer.

It carries out the reaction N(1)-(5-phospho-beta-D-ribosyl)glycinamide + formate + ATP = N(2)-formyl-N(1)-(5-phospho-beta-D-ribosyl)glycinamide + ADP + phosphate + H(+). It functions in the pathway purine metabolism; IMP biosynthesis via de novo pathway; N(2)-formyl-N(1)-(5-phospho-D-ribosyl)glycinamide from N(1)-(5-phospho-D-ribosyl)glycinamide (formate route): step 1/1. In terms of biological role, involved in the de novo purine biosynthesis. Catalyzes the transfer of formate to 5-phospho-ribosyl-glycinamide (GAR), producing 5-phospho-ribosyl-N-formylglycinamide (FGAR). Formate is provided by PurU via hydrolysis of 10-formyl-tetrahydrofolate. This is Formate-dependent phosphoribosylglycinamide formyltransferase from Shewanella amazonensis (strain ATCC BAA-1098 / SB2B).